The primary structure comprises 132 residues: Fatty acid-binding protein type 3 (132 aa).

Belongs to the calycin superfamily. Fatty-acid binding protein (FABP) family.

In Fasciola hepatica (Liver fluke), this protein is Fatty acid-binding protein type 3.